The following is a 111-amino-acid chain: Ig kappa chain V-III region PC 3741/TEPC 111 (111 aa).

The segment at 1 to 23 (DIVLTQSPASLAVSLGQRATISC) is framework-1. A disulfide bridge connects residues Cys-23 and Cys-92. Positions 24–38 (RASESVDSYGNSFMH) are complementarity-determining-1. The tract at residues 39–53 (WYQQKPGQPPKLLIY) is framework-2. Positions 54-60 (RASNLES) are complementarity-determining-2. Residues 61–92 (GIPARFSGSGSRTDFTLTINPVEADDVATYYC) form a framework-3 region. A complementarity-determining-3 region spans residues 93–101 (QQSNEDPYT). The segment at 102–111 (FGGGTKLEIK) is framework-4.

This is Ig kappa chain V-III region PC 3741/TEPC 111 from Mus musculus (Mouse).